The chain runs to 206 residues: Small ribosomal subunit protein uS4 (206 aa).

Positions 96 to 156 (CRLDNVVYRM…EKAKNQLRIV (61 aa)) constitute an S4 RNA-binding domain.

Belongs to the universal ribosomal protein uS4 family. Part of the 30S ribosomal subunit. Contacts protein S5. The interaction surface between S4 and S5 is involved in control of translational fidelity.

One of the primary rRNA binding proteins, it binds directly to 16S rRNA where it nucleates assembly of the body of the 30S subunit. Functionally, with S5 and S12 plays an important role in translational accuracy. This Pseudomonas savastanoi pv. phaseolicola (strain 1448A / Race 6) (Pseudomonas syringae pv. phaseolicola (strain 1448A / Race 6)) protein is Small ribosomal subunit protein uS4.